A 532-amino-acid chain; its full sequence is Flavin-containing monooxygenase 1 (532 aa).

The Lumenal portion of the chain corresponds to 1–510 (MVKRVAIVGA…TRTIQESPSS (510 aa)). FAD contacts are provided by residues 9–13 (GAGVS), Glu-32, 40–41 (LW), and 61–62 (NS). Residues 60–61 (SN) and 195–198 (SGTD) contribute to the NADP(+) site. The chain crosses the membrane as a helical span at residues 511 to 531 (FETLLKLFSFLALLIAVFLIF). Leu-532 is a topological domain (cytoplasmic).

Belongs to the FMO family. FAD is required as a cofactor. In terms of tissue distribution, liver.

Its subcellular location is the endoplasmic reticulum membrane. The enzyme catalyses hypotaurine + NADPH + O2 + H(+) = taurine + NADP(+) + H2O. The catalysed reaction is hypotaurine + NADH + O2 + H(+) = taurine + NAD(+) + H2O. It carries out the reaction trimethylamine + NADPH + O2 = trimethylamine N-oxide + NADP(+) + H2O. It catalyses the reaction N,N-dimethylaniline + NADPH + O2 + H(+) = N,N-dimethylaniline N-oxide + NADP(+) + H2O. Its function is as follows. Broad spectrum monooxygenase that catalyzes the oxygenation of a wide variety of nitrogen- and sulfur-containing compounds including xenobiotics. Catalyzes the S-oxygenation of hypotaurine to produce taurine, an organic osmolyte involved in cell volume regulation as well as a variety of cytoprotective and developmental processes. In vitro, catalyzes the N-oxygenation of trimethylamine (TMA) to produce trimethylamine N-oxide (TMAO) and could therefore participate to the detoxification of this compound that is generated by the action of gut microbiota from dietary precursors such as choline, choline containing compounds, betaine or L-carnitine. The protein is Flavin-containing monooxygenase 1 of Mus musculus (Mouse).